A 380-amino-acid polypeptide reads, in one-letter code: MAPNLRKSHPLLKMVNNSLIDLPAPSNISAWWNFGSLLGICLLTQILTGLLLAMHYTADTTLAFSSVAHTCRNVQYGWLIRNLHANGASFFFICIYLHIGRGFYYGSYLYKETWNTGVILLLTLMATAFVGYVLPWGQMSFWGATVITNLFSAIPYIGQTLVEWAWGGFSVDNPTLTRFFALHFLLPFMIAGLTLIHLTFLHESGSNNPLGIVSNCDKIPFHPYFTLKDILGFMLLLLPLTTLALFSPNLLGDPENFTPANPLVTPPHIKPEWYFLFAYAILRSIPNKLGGVLALAASVLVLFLAPFLHKAKQRAMTFRPISQLLFWILVANLFILTWVGSQPVEHPFIIIGQLASLTYFTILLILFPITGALENKMLNY.

Helical transmembrane passes span phenylalanine 34–methionine 54, tryptophan 78–isoleucine 99, tryptophan 114–leucine 134, and phenylalanine 179–threonine 199. Heme b is bound by residues histidine 84 and histidine 98. Positions 183 and 197 each coordinate heme b. Histidine 202 lines the a ubiquinone pocket. The next 4 helical transmembrane spans lie at leucine 227–serine 247, leucine 289–histidine 309, isoleucine 321–serine 341, and phenylalanine 348–proline 368.

It belongs to the cytochrome b family. In terms of assembly, the cytochrome bc1 complex contains 11 subunits: 3 respiratory subunits (MT-CYB, CYC1 and UQCRFS1), 2 core proteins (UQCRC1 and UQCRC2) and 6 low-molecular weight proteins (UQCRH/QCR6, UQCRB/QCR7, UQCRQ/QCR8, UQCR10/QCR9, UQCR11/QCR10 and a cleavage product of UQCRFS1). This cytochrome bc1 complex then forms a dimer. It depends on heme b as a cofactor.

The protein localises to the mitochondrion inner membrane. Its function is as follows. Component of the ubiquinol-cytochrome c reductase complex (complex III or cytochrome b-c1 complex) that is part of the mitochondrial respiratory chain. The b-c1 complex mediates electron transfer from ubiquinol to cytochrome c. Contributes to the generation of a proton gradient across the mitochondrial membrane that is then used for ATP synthesis. This chain is Cytochrome b (MT-CYB), found in Puffinus opisthomelas (Black-vented shearwater).